Here is a 500-residue protein sequence, read N- to C-terminus: MLLLRPYEFWFVTGSQHLYGEEVLQQVEGHSRTIVNELNRDSVFPFSFVFKSVVTTPEEIRNVCLEANASEQCAGVITWMHTFSPAKMWIGGLLELRKPLLHLHTQFNRDIPWDSIDMDFMNLNQSAHGDREYGFIGARMGVARKVVVGHWEDPEVRERLAKWMRTAVAFAESRQLKVARFGDNMREVAVTEGDKVGAQIQFGWSVNGYGVGDLVQSIRDVSEQSINELLDEYAELYDMVPAGRQDGPVRESIREQARIELGLKAFLQDGNFTAFTTTFEDLHGMKQLPGLAVQRLMAEGYGFGGEGDWKTAALVRLMKVMADGKGTSFMEDYTYHFEPGNELILGAHMLEVCPTIAATRPRIEVHPLSIGGKEDPARLVFDGGEGAAVNASLIDLGHRFRLIVNEVDAVKPKHNMPKLPVARILWKPRPSLRDSAEAWILAGGAHHTCFSFAVTTEQLQDFAEIIGVECVVINEHTSVASFKNELRWNEVFWGRKQGLL.

Mn(2+)-binding residues include Glu306, Glu331, His348, and His447.

It belongs to the arabinose isomerase family. Mn(2+) serves as cofactor.

It catalyses the reaction beta-L-arabinopyranose = L-ribulose. The protein operates within carbohydrate degradation; L-arabinose degradation via L-ribulose; D-xylulose 5-phosphate from L-arabinose (bacterial route): step 1/3. In terms of biological role, catalyzes the conversion of L-arabinose to L-ribulose. In Anoxybacillus flavithermus (strain DSM 21510 / WK1), this protein is L-arabinose isomerase.